We begin with the raw amino-acid sequence, 265 residues long: uncharacterized protein (265 aa).

The N-terminal stretch at 1–23 (MNYFRILYCSVLLFFSFFSCTSA) is a signal peptide. A NodB homology domain is found at 67–248 (KEIYLTFDNG…TLKQQGYTFK (182 aa)).

Belongs to the polysaccharide deacetylase family.

This is an uncharacterized protein from Geobacillus stearothermophilus (Bacillus stearothermophilus).